The chain runs to 144 residues: Large ribosomal subunit protein uL16 (144 aa).

This sequence belongs to the universal ribosomal protein uL16 family. As to quaternary structure, part of the 50S ribosomal subunit.

Binds 23S rRNA and is also seen to make contacts with the A and possibly P site tRNAs. The protein is Large ribosomal subunit protein uL16 of Pediococcus pentosaceus (strain ATCC 25745 / CCUG 21536 / LMG 10740 / 183-1w).